Consider the following 271-residue polypeptide: Phospholipid scramblase family member 5 (271 aa).

Over residues 1–10 (MASKDAQNQR) the composition is skewed to polar residues. Positions 1-33 (MASKDAQNQRRGLPGFLPGAPDPDQSLPASSNP) are disordered. The interval 1–45 (MASKDAQNQRRGLPGFLPGAPDPDQSLPASSNPGNQAWQLSLPLP) is proline-rich domain (PRD).

It belongs to the phospholipid scramblase family.

The polypeptide is Phospholipid scramblase family member 5 (PLSCR5) (Homo sapiens (Human)).